A 238-amino-acid polypeptide reads, in one-letter code: 1-(5-phosphoribosyl)-5-[(5-phosphoribosylamino)methylideneamino] imidazole-4-carboxamide isomerase (238 aa).

Residue Asp-8 is the Proton acceptor of the active site. The active-site Proton donor is Asp-129.

Belongs to the HisA/HisF family.

The protein localises to the cytoplasm. It carries out the reaction 1-(5-phospho-beta-D-ribosyl)-5-[(5-phospho-beta-D-ribosylamino)methylideneamino]imidazole-4-carboxamide = 5-[(5-phospho-1-deoxy-D-ribulos-1-ylimino)methylamino]-1-(5-phospho-beta-D-ribosyl)imidazole-4-carboxamide. The protein operates within amino-acid biosynthesis; L-histidine biosynthesis; L-histidine from 5-phospho-alpha-D-ribose 1-diphosphate: step 4/9. This is 1-(5-phosphoribosyl)-5-[(5-phosphoribosylamino)methylideneamino] imidazole-4-carboxamide isomerase from Clostridium novyi (strain NT).